A 20-amino-acid polypeptide reads, in one-letter code: Ribosome-inactivating protein (20 aa).

A disordered region spans residues 1–20 (NVRFDLSGATSSSYKTFIKN). The span at 8-20 (GATSSSYKTFIKN) shows a compositional bias: polar residues.

The protein belongs to the ribosome-inactivating protein family. Type 1 RIP subfamily.

The catalysed reaction is Endohydrolysis of the N-glycosidic bond at one specific adenosine on the 28S rRNA.. The polypeptide is Ribosome-inactivating protein (Cucurbita pepo (Vegetable marrow)).